Reading from the N-terminus, the 429-residue chain is C4-dicarboxylate transport protein (429 aa).

Transmembrane regions (helical) follow at residues 3-23, 44-64, 76-96, 144-164, 184-204, 222-242, 331-351, and 352-372; these read VSIFKTLYFQVLTAITIGVLL, LIKMIIAPVIFCTVVTGIAGM, IALLYFEIVSTLALLIGLVVV, AFASGNILQVLLFAVLFGFAL, VIFGVINMIMRLAPLGAFGAM, LILCFYLTCILFVVLVLGTIA, TLLVVLLLSSKGAAGVTGSGF, and IVLAATISAVGHLPLAGLALI.

It belongs to the dicarboxylate/amino acid:cation symporter (DAACS) (TC 2.A.23) family.

It localises to the cell inner membrane. In terms of biological role, responsible for the transport of dicarboxylates such as succinate, fumarate, and malate from the periplasm across the membrane. The sequence is that of C4-dicarboxylate transport protein from Yersinia pestis bv. Antiqua (strain Antiqua).